A 198-amino-acid chain; its full sequence is Large ribosomal subunit protein bL25 (198 aa).

It belongs to the bacterial ribosomal protein bL25 family. CTC subfamily. As to quaternary structure, part of the 50S ribosomal subunit; part of the 5S rRNA/L5/L18/L25 subcomplex. Contacts the 5S rRNA. Binds to the 5S rRNA independently of L5 and L18.

Its function is as follows. This is one of the proteins that binds to the 5S RNA in the ribosome where it forms part of the central protuberance. In Azotobacter vinelandii (strain DJ / ATCC BAA-1303), this protein is Large ribosomal subunit protein bL25.